A 492-amino-acid polypeptide reads, in one-letter code: 2-succinylbenzoate--CoA ligase (492 aa).

The protein belongs to the ATP-dependent AMP-binding enzyme family. MenE subfamily.

It carries out the reaction 2-succinylbenzoate + ATP + CoA = 2-succinylbenzoyl-CoA + AMP + diphosphate. Its pathway is quinol/quinone metabolism; 1,4-dihydroxy-2-naphthoate biosynthesis; 1,4-dihydroxy-2-naphthoate from chorismate: step 5/7. The protein operates within quinol/quinone metabolism; menaquinone biosynthesis. In terms of biological role, converts 2-succinylbenzoate (OSB) to 2-succinylbenzoyl-CoA (OSB-CoA). The polypeptide is 2-succinylbenzoate--CoA ligase (Staphylococcus aureus (strain MSSA476)).